Consider the following 291-residue polypeptide: MTTLAIDIGGTKLAAALIGADGQIRDRRELPTPASQTPQALRDALSALVSPLQAHAQRVAIASTGIIRDGSLLALNPHNLGGLLHFPLVKTLEQLTNLPTIAINDAQAAAWAEYQALDGDITDMVFITVSTGVGGGVVSGGKLRTGPGGLAGHIGHTLADPHGPVCGCGRTGCVEAIASGRGIATAAQGELAGANAKTIFTRAGQGDEQAQQLIHRSARTLARLIADIKATTDCQCVVVGGSVGLAEGYLALVETYLAQEPAAFHVDLLAAHYRHDAGLLGAALLAQGEIL.

Residues 5-12 and 132-139 each bind ATP; these read AIDIGGTK and GVGGGVVS. 4 residues coordinate Zn(2+): H156, C166, C168, and C173.

This sequence belongs to the ROK (NagC/XylR) family. NanK subfamily. As to quaternary structure, homodimer.

The enzyme catalyses an N-acyl-D-mannosamine + ATP = an N-acyl-D-mannosamine 6-phosphate + ADP + H(+). The protein operates within amino-sugar metabolism; N-acetylneuraminate degradation; D-fructose 6-phosphate from N-acetylneuraminate: step 2/5. In terms of biological role, catalyzes the phosphorylation of N-acetylmannosamine (ManNAc) to ManNAc-6-P. This is N-acetylmannosamine kinase (nanK1) from Escherichia coli O6:H1 (strain CFT073 / ATCC 700928 / UPEC).